The chain runs to 1452 residues: ABC-type transporter adrC (1452 aa).

Residues 1 to 38 (MAPEEGDQAMSHEDKAACSSLNTTSSTELFDGAPSSEN) are disordered. The span at 19 to 28 (SSLNTTSSTE) shows a compositional bias: polar residues. The ABC transporter 1 domain maps to 116-378 (KRLMSIVGNK…FETMGWKRPP (263 aa)). 6 helical membrane passes run 487-507 (IPALIATAVAQTVVSLIIGSL), 524-544 (VLFLAVLTNALISLLEITTLY), 569-589 (VIVDFPIKLFRCLLSAIIVYF), 598-618 (SHFFIYIMFQLTAVMTMATIF), 631-651 (AMALAGVVIICIAVYTGFTVP), and 738-758 (GILVAFLVFFYVLYFWLTELI). The 243-residue stretch at 813–1055 (FSWKGLSYDI…TVLEYLEDKG (243 aa)) folds into the ABC transporter 2 domain. 849-856 (GVSGAGKT) contacts ATP. Transmembrane regions (helical) follow at residues 1149-1169 (YILAKFGAGVFCGVFIGFSFW), 1181-1201 (VLFSLFLLCTIFSTLVNQIMP), 1224-1244 (VFILCQILVELPWQTLLGICT), 1264-1284 (LVLLFTVQFFIFASTFAQLVV), 1287-1307 (VPSVVLGSMLATFTFLLCLLF), 1322-1344 (IFMNRVSPLTYYVGGISATALHG), and 1415-1435 (FGIFWVYIIFNVIGAVLLYYL).

It belongs to the ABC transporter superfamily. ABCG family. PDR (TC 3.A.1.205) subfamily.

The protein localises to the membrane. Its function is as follows. ABC-type transporter; part of the gene cluster that mediates the biosynthesis of the meroterpenoid compound andrastin A, a promising antitumoral compound. Is required for the production of andrastin A but does not have a significant role in its secretion. The protein is ABC-type transporter adrC of Penicillium roqueforti.